We begin with the raw amino-acid sequence, 201 residues long: Ras-related protein Rab-1B (201 aa).

Met-1 carries the post-translational modification N-acetylmethionine. Ser-17, Gly-18, Val-19, Gly-20, Lys-21, Ser-22, Cys-23, Tyr-33, Thr-34, Glu-35, Ser-36, Ser-39, and Thr-40 together coordinate GTP. Mg(2+) is bound at residue Ser-22. Positions 30–45 (DDTYTESYISTIGVDF) match the Switch 1 motif. Mg(2+) contacts are provided by Thr-40 and Asp-63. Residues 64-83 (TAGQERGRTITSSYYRGAHG) are switch 2 region; required for interaction with REP1/CHM. Positions 65–80 (AGQERGRTITSSYYRG) match the Switch 2 motif. Residues Gly-66, Asn-121, Lys-122, Asp-124, Ser-151, Ala-152, and Lys-153 each coordinate GTP. Residues 173–201 (MGPGAASGGERPNLKIDSTPVKQAGGGCC) are disordered. 2 S-geranylgeranyl cysteine lipidation sites follow: Cys-200 and Cys-201. Cys-201 carries the post-translational modification Cysteine methyl ester.

Belongs to the small GTPase superfamily. Rab family. As to quaternary structure, interacts with MICAL1 and MICAL2. Interacts (in GTP-bound form) with MICALCL, MICAL1 and MILCAL3. Interacts with GDI1; the interaction requires the GDP-bound state. Interacts with CHM/REP1; the interaction requires the GDP-bound form and is necessary for prenylation by GGTase II. Interacts with RabGAP TBC1D20. Interacts (in GDP-bound form) with lipid phosphatase MTMR6 (via GRAM domain); the interaction regulates MTMR6 recruitment to the endoplasmic reticulum-Golgi intermediate compartment. Interacts (in GDP-bound form) with lipid phosphatase MTMR7. It depends on Mg(2+) as a cofactor. Post-translationally, prenylated; by GGTase II, only after interaction of the substrate with Rab escort protein 1 (REP1).

It localises to the cytoplasm. The protein resides in the membrane. The protein localises to the preautophagosomal structure membrane. Its subcellular location is the perinuclear region. It catalyses the reaction GTP + H2O = GDP + phosphate + H(+). Its activity is regulated as follows. Regulated by guanine nucleotide exchange factors (GEFs) which promote the exchange of bound GDP for free GTP. Regulated by GTPase activating proteins (GAPs) including TBC1D20 which increases the GTP hydrolysis activity. Inhibited by GDP dissociation inhibitors (GDIs). Functionally, the small GTPases Rab are key regulators of intracellular membrane trafficking, from the formation of transport vesicles to their fusion with membranes. Rabs cycle between an inactive GDP-bound form and an active GTP-bound form that is able to recruit to membranes different set of downstream effectors directly responsible for vesicle formation, movement, tethering and fusion. Plays a role in the initial events of the autophagic vacuole development which take place at specialized regions of the endoplasmic reticulum. Regulates vesicular transport between the endoplasmic reticulum and successive Golgi compartments. Required to modulate the compacted morphology of the Golgi. Promotes the recruitment of lipid phosphatase MTMR6 to the endoplasmic reticulum-Golgi intermediate compartment. The chain is Ras-related protein Rab-1B (RAB1B) from Sus scrofa (Pig).